Consider the following 604-residue polypeptide: Nuclear factor erythroid 2-related factor 2 (604 aa).

The short motif at 29-31 (DLG) is the DLG motif element. Position 40 is a phosphoserine; by PKC (Ser40). The ETGE motif motif lies at 79 to 82 (ETGE). Ser214 carries the post-translational modification Phosphoserine. The interval 334-447 (TVEFNDSDSG…VPFTKDKHSS (114 aa)) is disordered. Composition is skewed to polar residues over residues 340–352 (SDSG…SPSR) and 395–407 (PTHS…QPLS). 3 N-linked (Glc) (glycation) lysine glycosylation sites follow: Lys461, Lys471, and Lys486. In terms of domain architecture, bZIP spans 496-559 (LIRDIRRRGK…HLLKRKLSTL (64 aa)). N-linked (Glc) (glycation) arginine glycosylation is present at Arg498. Residues 498–517 (RDIRRRGKNKVAAQNCRKRK) are basic motif. Residues 521 to 528 (IVELEQDL) are leucine-zipper. Arg568 carries N-linked (Glc) (glycation) arginine glycosylation. A disordered region spans residues 570-604 (EDGKPYSPSEYSLQQTRDGNVFLVPKSKKPDTKKN). Residue Lys573 is glycosylated (N-linked (Glc) (glycation) lysine). Positions 578–587 (SEYSLQQTRD) are enriched in polar residues. Residues 590 to 595 (VFLVPK) are mediates interaction with CHD6 and is necessary to activate transcription. N6-acetyllysine; by CREBBP is present on residues Lys595 and Lys598.

It belongs to the bZIP family. CNC subfamily. Heterodimer; heterodimerizes with small Maf proteins. Interacts (via the bZIP domain) with MAFG and MAFK; required for binding to antioxidant response elements (AREs) on DNA. Interacts with KEAP1; the interaction is direct and promotes ubiquitination by the BCR(KEAP1) E3 ubiquitin ligase complex. Forms a ternary complex with PGAM5 and KEAP1. Interacts with EEF1D at heat shock promoter elements (HSE). Interacts via its leucine-zipper domain with the coiled-coil domain of PMF1. Interacts with CHD6; involved in activation of the transcription. Interacts with ESRRB; represses NFE2L2 transcriptional activity. Interacts with MOTS-c, a peptide produced by the mitochondrially encoded 12S rRNA MT-RNR1; the interaction occurs in the nucleus following metabolic stress. Post-translationally, ubiquitinated in the cytoplasm by the BCR(KEAP1) E3 ubiquitin ligase complex leading to its degradation. In response to oxidative stress, electrophile metabolites, such as sulforaphane, modify KEAP1, leading to inhibit activity of the BCR(KEAP1) complex, promoting NFE2L2/NRF2 nuclear accumulation and activity. In response to autophagy, the BCR(KEAP1) complex is inactivated. Phosphorylated by EIF2AK3/PERK following unfolded protein response (UPR), promoting dissociation from its cytoplasmic inhibitor KEAP1, followed by its translocation into the nucleus. Phosphorylation of Ser-40 by PKC in response to oxidative stress dissociates NFE2L2 from its cytoplasmic inhibitor KEAP1, promoting its translocation into the nucleus. In terms of processing, acetylation at Lys-595 and Lys-598 increases nuclear localization whereas deacetylation by SIRT1 enhances cytoplasmic presence. Post-translationally, glycation impairs transcription factor activity by preventing heterodimerization with small Maf proteins. Deglycation by FN3K restores activity.

It is found in the cytoplasm. It localises to the cytosol. The protein resides in the nucleus. In terms of biological role, transcription factor that plays a key role in the response to oxidative stress: binds to antioxidant response (ARE) elements present in the promoter region of many cytoprotective genes, such as phase 2 detoxifying enzymes, and promotes their expression, thereby neutralizing reactive electrophiles. In normal conditions, ubiquitinated and degraded in the cytoplasm by the BCR(KEAP1) complex. In response to oxidative stress, electrophile metabolites inhibit activity of the BCR(KEAP1) complex, promoting nuclear accumulation of NFE2L2/NRF2, heterodimerization with one of the small Maf proteins and binding to ARE elements of cytoprotective target genes. The NFE2L2/NRF2 pathway is also activated in response to selective autophagy: autophagy promotes interaction between KEAP1 and SQSTM1/p62 and subsequent inactivation of the BCR(KEAP1) complex, leading to NFE2L2/NRF2 nuclear accumulation and expression of cytoprotective genes. The NFE2L2/NRF2 pathway is also activated during the unfolded protein response (UPR), contributing to redox homeostasis and cell survival following endoplasmic reticulum stress. May also be involved in the transcriptional activation of genes of the beta-globin cluster by mediating enhancer activity of hypersensitive site 2 of the beta-globin locus control region. Also plays an important role in the regulation of the innate immune response. It is a critical regulator of the innate immune response and survival during sepsis by maintaining redox homeostasis and restraint of the dysregulation of pro-inflammatory signaling pathways like MyD88-dependent and -independent and TNF-alpha signaling. Suppresses macrophage inflammatory response by blocking pro-inflammatory cytokine transcription and the induction of IL6. Binds to the proximity of pro-inflammatory genes in macrophages and inhibits RNA Pol II recruitment. The inhibition is independent of the Nrf2-binding motif and reactive oxygen species level. Represses antiviral cytosolic DNA sensing by suppressing the expression of the adapter protein STING1 and decreasing responsiveness to STING1 agonists while increasing susceptibility to infection with DNA viruses. The chain is Nuclear factor erythroid 2-related factor 2 from Rattus norvegicus (Rat).